The sequence spans 204 residues: UPF0637 protein SAB0972c (204 aa).

The protein belongs to the UPF0637 family.

This is UPF0637 protein SAB0972c from Staphylococcus aureus (strain bovine RF122 / ET3-1).